Consider the following 588-residue polypeptide: uncharacterized protein (588 aa).

A run of 7 helical transmembrane segments spans residues 14-34 (FLLFLPYFIGLLFLGFIKGIV), 49-69 (AVILSLLPVHIVWTFYSIVSA), 78-98 (IFLCLCLPAAIILWPIVGILG), 184-204 (ALVVSVLGILVDPPVISLVAI), 235-255 (VPIAGLAILLWPLAVTGAVIG), 257-274 (VISSIFLGAYAGVVSYQE), and 275-292 (SSFYYGLCYIVASVSIYD). The residue at position 486 (serine 486) is a Phosphoserine. The interval 566–588 (RKGSVNGSDQESQKGVSRNVDIV) is disordered. A compositionally biased stretch (polar residues) spans 570–581 (VNGSDQESQKGV).

The protein localises to the membrane. This is an uncharacterized protein from Arabidopsis thaliana (Mouse-ear cress).